The chain runs to 115 residues: NADH-ubiquinone oxidoreductase chain 3 (115 aa).

The next 3 helical transmembrane spans lie at 3 to 23 (LMLV…IAFW), 55 to 75 (FFLV…LLPL), and 87 to 107 (VLIM…YEWI).

This sequence belongs to the complex I subunit 3 family. In terms of assembly, core subunit of respiratory chain NADH dehydrogenase (Complex I) which is composed of 45 different subunits. Interacts with TMEM186. Interacts with TMEM242.

The protein resides in the mitochondrion inner membrane. It catalyses the reaction a ubiquinone + NADH + 5 H(+)(in) = a ubiquinol + NAD(+) + 4 H(+)(out). Core subunit of the mitochondrial membrane respiratory chain NADH dehydrogenase (Complex I) which catalyzes electron transfer from NADH through the respiratory chain, using ubiquinone as an electron acceptor. Essential for the catalytic activity of complex I. This is NADH-ubiquinone oxidoreductase chain 3 from Oryctolagus cuniculus (Rabbit).